The following is a 202-amino-acid chain: Glycerol-3-phosphate acyltransferase (202 aa).

6 consecutive transmembrane segments (helical) span residues 2-22 (MIIVMLLLSYLIGAFPSGFVI), 54-74 (FLVTFLDIFKGFITVFFPLWL), 85-105 (FFTNGLIVGLFAILGHVYPVY), 120-140 (VVLGVNPILLLILAIIFFIIL), 141-161 (KIFKYVSLASIVAAICCVIGS), and 162-182 (LIIQDYILLVVSFLVSIILII).

Belongs to the PlsY family. Probably interacts with PlsX.

The protein resides in the cell membrane. The catalysed reaction is an acyl phosphate + sn-glycerol 3-phosphate = a 1-acyl-sn-glycero-3-phosphate + phosphate. Its pathway is lipid metabolism; phospholipid metabolism. In terms of biological role, catalyzes the transfer of an acyl group from acyl-phosphate (acyl-PO(4)) to glycerol-3-phosphate (G3P) to form lysophosphatidic acid (LPA). This enzyme utilizes acyl-phosphate as fatty acyl donor, but not acyl-CoA or acyl-ACP. This Staphylococcus aureus (strain bovine RF122 / ET3-1) protein is Glycerol-3-phosphate acyltransferase.